The chain runs to 166 residues: Bud site selection protein 20 (166 aa).

The Nuclear localization signal signature appears at 7 to 16; it reads KRYKTKRRTR. Residues 17 to 31 are nuclear export signal-like (NES-like); it reads DLDLIYNDLSTKESV. A C2H2-type zinc finger spans residues 49–73; that stretch reads HYCIHCAKYMETAIALKTHLKGKVH.

It belongs to the ZNF593/BUD20 C2H2-type zinc-finger protein family. As to quaternary structure, associates with pre-60S ribosomal particles; released from the pre-60S particle very early in the cytoplasm.

It localises to the nucleus. Its subcellular location is the cytoplasm. Involved in pre-60S ribosomal particles maturation by promoting the nuclear export of the 60S ribosome. Involved in positioning the proximal bud pole signal. This is Bud site selection protein 20 from Saccharomyces cerevisiae (strain ATCC 204508 / S288c) (Baker's yeast).